The sequence spans 291 residues: Small ribosomal subunit biogenesis GTPase RsgA (291 aa).

The CP-type G domain occupies 63 to 221 (KNELKRPPVS…IADTPGFSAL (159 aa)). Residues 112-115 (TKKD) and 164-172 (GQSGVGKST) contribute to the GTP site. Zn(2+)-binding residues include cysteine 245, cysteine 250, histidine 252, and cysteine 258.

It belongs to the TRAFAC class YlqF/YawG GTPase family. RsgA subfamily. In terms of assembly, monomer. Associates with 30S ribosomal subunit, binds 16S rRNA. The cofactor is Zn(2+).

Its subcellular location is the cytoplasm. Its function is as follows. One of several proteins that assist in the late maturation steps of the functional core of the 30S ribosomal subunit. Helps release RbfA from mature subunits. May play a role in the assembly of ribosomal proteins into the subunit. Circularly permuted GTPase that catalyzes slow GTP hydrolysis, GTPase activity is stimulated by the 30S ribosomal subunit. The sequence is that of Small ribosomal subunit biogenesis GTPase RsgA from Staphylococcus aureus (strain MRSA252).